Consider the following 933-residue polypeptide: Isoleucine--tRNA ligase (933 aa).

Positions 57-67 (PYANGNIHVGH) match the 'HIGH' region motif. E554 serves as a coordination point for L-isoleucyl-5'-AMP. The short motif at 595-599 (KMSKS) is the 'KMSKS' region element. K598 contributes to the ATP binding site.

Belongs to the class-I aminoacyl-tRNA synthetase family. IleS type 1 subfamily. As to quaternary structure, monomer.

It is found in the cytoplasm. The enzyme catalyses tRNA(Ile) + L-isoleucine + ATP = L-isoleucyl-tRNA(Ile) + AMP + diphosphate. Functionally, catalyzes the attachment of isoleucine to tRNA(Ile). As IleRS can inadvertently accommodate and process structurally similar amino acids such as valine, to avoid such errors it has two additional distinct tRNA(Ile)-dependent editing activities. One activity is designated as 'pretransfer' editing and involves the hydrolysis of activated Val-AMP. The other activity is designated 'posttransfer' editing and involves deacylation of mischarged Val-tRNA(Ile). In Streptococcus pyogenes serotype M3 (strain ATCC BAA-595 / MGAS315), this protein is Isoleucine--tRNA ligase.